A 697-amino-acid chain; its full sequence is Elongation factor G (697 aa).

The tr-type G domain maps to 8 to 283; that stretch reads ERCRNIGIMA…AVVDYLPSPL (276 aa). GTP contacts are provided by residues 17 to 24, 81 to 85, and 135 to 138; these read AHIDAGKT, DTPGH, and NKID.

Belongs to the TRAFAC class translation factor GTPase superfamily. Classic translation factor GTPase family. EF-G/EF-2 subfamily.

Its subcellular location is the cytoplasm. Functionally, catalyzes the GTP-dependent ribosomal translocation step during translation elongation. During this step, the ribosome changes from the pre-translocational (PRE) to the post-translocational (POST) state as the newly formed A-site-bound peptidyl-tRNA and P-site-bound deacylated tRNA move to the P and E sites, respectively. Catalyzes the coordinated movement of the two tRNA molecules, the mRNA and conformational changes in the ribosome. The sequence is that of Elongation factor G from Koribacter versatilis (strain Ellin345).